The following is a 347-amino-acid chain: Putative histone PARylation factor 1-like (347 aa).

Met1 bears the N-acetylmethionine mark. An N6-acetyllysine mark is found at Lys187 and Lys234.

This sequence belongs to the HPF1 family.

This chain is Putative histone PARylation factor 1-like, found in Homo sapiens (Human).